The chain runs to 276 residues: 2-hydroxy-6-oxo-2,4-heptadienoate hydrolase (276 aa).

Residues 28 to 259 (NPVVLVHGSG…GRCGHWVQIE (232 aa)) form the AB hydrolase-1 domain. Active-site residues include Ser-105, Asp-226, and His-254.

Belongs to the DmpD/TodF/XylF esterase family.

It catalyses the reaction (2Z,4E)-2-hydroxy-6-oxohepta-2,4-dienoate + H2O = (2Z)-2-hydroxypenta-2,4-dienoate + acetate + H(+). It functions in the pathway xenobiotic degradation; toluene degradation. In terms of biological role, catalyzes the hydrolysis of 2-hydroxy-6-oxohepta-2,4-dienoate into 2-hydroxypenta-2,4-dienoate and acetate. The sequence is that of 2-hydroxy-6-oxo-2,4-heptadienoate hydrolase (todF) from Pseudomonas putida (strain ATCC 700007 / DSM 6899 / JCM 31910 / BCRC 17059 / LMG 24140 / F1).